The primary structure comprises 222 residues: Thiamine-phosphate synthase (222 aa).

Residues 44 to 48 (QFREK) and N79 contribute to the 4-amino-2-methyl-5-(diphosphooxymethyl)pyrimidine site. Positions 80 and 99 each coordinate Mg(2+). Position 117 (S117) interacts with 4-amino-2-methyl-5-(diphosphooxymethyl)pyrimidine. 143 to 145 (TET) contacts 2-[(2R,5Z)-2-carboxy-4-methylthiazol-5(2H)-ylidene]ethyl phosphate. Position 146 (K146) interacts with 4-amino-2-methyl-5-(diphosphooxymethyl)pyrimidine. 2-[(2R,5Z)-2-carboxy-4-methylthiazol-5(2H)-ylidene]ethyl phosphate is bound by residues G175 and 195-196 (IS).

This sequence belongs to the thiamine-phosphate synthase family. Monomer. The cofactor is Mg(2+).

The enzyme catalyses 2-[(2R,5Z)-2-carboxy-4-methylthiazol-5(2H)-ylidene]ethyl phosphate + 4-amino-2-methyl-5-(diphosphooxymethyl)pyrimidine + 2 H(+) = thiamine phosphate + CO2 + diphosphate. It carries out the reaction 2-(2-carboxy-4-methylthiazol-5-yl)ethyl phosphate + 4-amino-2-methyl-5-(diphosphooxymethyl)pyrimidine + 2 H(+) = thiamine phosphate + CO2 + diphosphate. It catalyses the reaction 4-methyl-5-(2-phosphooxyethyl)-thiazole + 4-amino-2-methyl-5-(diphosphooxymethyl)pyrimidine + H(+) = thiamine phosphate + diphosphate. The protein operates within cofactor biosynthesis; thiamine diphosphate biosynthesis; thiamine phosphate from 4-amino-2-methyl-5-diphosphomethylpyrimidine and 4-methyl-5-(2-phosphoethyl)-thiazole: step 1/1. Functionally, condenses 4-methyl-5-(beta-hydroxyethyl)thiazole monophosphate (THZ-P) and 2-methyl-4-amino-5-hydroxymethyl pyrimidine pyrophosphate (HMP-PP) to form thiamine monophosphate (TMP). Is also able to use the 2-methoxy analog MeO-HMP-PP, as substrate in vitro, but not the 2-trifluoromethyl analog CF(3)-HMP-PP. The chain is Thiamine-phosphate synthase (thiE) from Bacillus subtilis (strain 168).